The sequence spans 37 residues: MKIRTSVKVICDKCKLIKRFGIIRVICVNPKHKQRQG.

The protein belongs to the bacterial ribosomal protein bL36 family.

The sequence is that of Large ribosomal subunit protein bL36 from Treponema pallidum (strain Nichols).